The sequence spans 274 residues: Secreted RxLR effector protein 144 (274 aa).

The first 20 residues, 1-20 (MRPWLLLLVGLSSFFALSTS), serve as a signal peptide directing secretion. The RxLR-dEER motif lies at 49–72 (RKLRAFGGDTNTLKDSGKARREEK).

It belongs to the RxLR effector family.

The protein resides in the secreted. Its subcellular location is the host nucleus. It is found in the host cytoplasm. Its function is as follows. Secreted effector that completely suppresses the host cell death induced by cell death-inducing proteins. This is Secreted RxLR effector protein 144 from Plasmopara viticola (Downy mildew of grapevine).